Here is a 506-residue protein sequence, read N- to C-terminus: MEFVVSLFAFVVSCFILLKVAKNSKNPKRNTNLELPPGPKQLPIIGNLHQLGGGLAHHVLRNLGKQYGPLMHLKIGELSTIVVSSTEIAKEVFKTHDIHFSNRPSHILVFKIVSYDYKDIVLSQYGKYWRELRKVCNLELLSPNRVQSFRSIREDAVLNMMKSISSNDGKVVNLSEMILSLIYGITARAAFGVWSKKHEEFIRLESEIQRLATTFVLADMFPSIKFLGALSGLRYKVEKVHKKVDDILEGILKEHRRQNNNMTEENGKKDLVDVLLNIQKNGDMETPFTDQHIKAIIFDMFSAGTLTSTIAVDWAMAEMMKNPSVLKRAQDEVRNVYNGIGNVDESKLDELKYLQAVIKETLRIHPGTPIVHRETREECEINGYRIPAKARVMVNAWAISRDPNYWPEPDIFKPERFLGSEVDFKGTHFEYIPFGAGRRICPGISYAIANVQLPLAQLLYHFEWKLPGGMKPEELDMTEILGTAAQRKENLLLIPNSHSCSSLKQV.

A helical transmembrane segment spans residues 1–21; the sequence is MEFVVSLFAFVVSCFILLKVA. N-linked (GlcNAc...) asparagine glycans are attached at residues Asn-173 and Asn-261. Residue Cys-441 coordinates heme.

The protein belongs to the cytochrome P450 family. It depends on heme as a cofactor. Mainly expressed in roots.

It is found in the endoplasmic reticulum membrane. The catalysed reaction is (-)-tabersonine + reduced [NADPH--hemoprotein reductase] + O2 = lochnericine + oxidized [NADPH--hemoprotein reductase] + H2O + H(+). It functions in the pathway alkaloid biosynthesis. In terms of biological role, component of the monoterpenoid indole alkaloids (MIAs, e.g. echitovenine, tabersonine, lochnericine, 19-hydroxytabersonine and horhammericine) biosynthetic pathway; MIAs are used in cancer treatment and other medical applications. Cytochrome P450 catalyzing the conversion of tabersonine to lochnericine. This is Tabersonine 6,7-epoxidase isoform 1 from Catharanthus roseus (Madagascar periwinkle).